Here is a 149-residue protein sequence, read N- to C-terminus: Antitoxin HigA1 (149 aa).

Positions 42–96 (LIALRKHCQLSQVEVAKRMGVRQPTVSGFEKEPSDPKLSTLQRYARALDARLRLV) constitute an HTH cro/C1-type domain. Residues 53 to 72 (QVEVAKRMGVRQPTVSGFEK) constitute a DNA-binding region (H-T-H motif).

Interacts with SecB-like chaperone MT2006.

Its function is as follows. Antitoxin component of an atypical, type II toxin-antitoxin chaperone (TAC) system. Probably neutralizes the toxic effects of cognate toxin HigB1, which also requires SecB-like chaperone MT2006 (AC Q7D7P7). Autorepresses its operon (higB1-higA1-MT2006). The protein is Antitoxin HigA1 of Mycobacterium tuberculosis (strain CDC 1551 / Oshkosh).